Consider the following 596-residue polypeptide: Beta-fructofuranosidase, insoluble isoenzyme 7 (596 aa).

The first 24 residues, 1 to 24, serve as a signal peptide directing secretion; sequence MARLGLAVCAASFHLFLLLASTSS. Residues 51–54, Q70, and W78 contribute to the substrate site; that span reads WQND. The active site involves D54. N82 carries an N-linked (GlcNAc...) asparagine glycan. Substrate contacts are provided by residues 115–116, 179–180, and E234; these read WS and RD. An N-linked (GlcNAc...) asparagine glycan is attached at N330. A disulfide bridge links C432 with C478. N-linked (GlcNAc...) asparagine glycosylation is present at N552.

It belongs to the glycosyl hydrolase 32 family.

The protein localises to the secreted. It localises to the extracellular space. The protein resides in the apoplast. Its subcellular location is the cell wall. The enzyme catalyses Hydrolysis of terminal non-reducing beta-D-fructofuranoside residues in beta-D-fructofuranosides.. In terms of biological role, may play a role in sucrose partitioning during seed development. In Oryza sativa subsp. indica (Rice), this protein is Beta-fructofuranosidase, insoluble isoenzyme 7 (CIN7).